A 307-amino-acid chain; its full sequence is uncharacterized protein (307 aa).

An N-terminal signal peptide occupies residues 1-25; that stretch reads MKFQKRNIQLVLILLLILNNCFINS. Residues 60–90 are disordered; it reads ENNNKNNNNNNNNNNNNNNNNKNSKVKNDDS. The span at 63–82 shows a compositional bias: low complexity; the sequence is NKNNNNNNNNNNNNNNNNKN. N-linked (GlcNAc...) asparagine glycans are attached at residues Asn-124 and Asn-173. The next 2 membrane-spanning stretches (helical) occupy residues 244–264 and 275–295; these read IIFA…YYLA and IIGV…TIVI.

The protein resides in the membrane. This is an uncharacterized protein from Dictyostelium discoideum (Social amoeba).